A 472-amino-acid polypeptide reads, in one-letter code: uncharacterized protein (472 aa).

The protein belongs to the AllG family.

This is an uncharacterized protein from Escherichia coli (strain K12).